We begin with the raw amino-acid sequence, 134 residues long: Large ribosomal subunit protein eL32 (134 aa).

Belongs to the eukaryotic ribosomal protein eL32 family.

The chain is Large ribosomal subunit protein eL32 (RPL32) from Tetrahymena thermophila (strain SB210).